We begin with the raw amino-acid sequence, 361 residues long: Chorismate synthase (361 aa).

NADP(+)-binding residues include R48 and R54. FMN is bound by residues 125–127 (RSS), 238–239 (NA), G278, 293–297 (KPTSS), and R319.

The protein belongs to the chorismate synthase family. Homotetramer. It depends on FMNH2 as a cofactor.

It catalyses the reaction 5-O-(1-carboxyvinyl)-3-phosphoshikimate = chorismate + phosphate. It functions in the pathway metabolic intermediate biosynthesis; chorismate biosynthesis; chorismate from D-erythrose 4-phosphate and phosphoenolpyruvate: step 7/7. Functionally, catalyzes the anti-1,4-elimination of the C-3 phosphate and the C-6 proR hydrogen from 5-enolpyruvylshikimate-3-phosphate (EPSP) to yield chorismate, which is the branch point compound that serves as the starting substrate for the three terminal pathways of aromatic amino acid biosynthesis. This reaction introduces a second double bond into the aromatic ring system. The chain is Chorismate synthase from Vibrio vulnificus (strain YJ016).